A 277-amino-acid polypeptide reads, in one-letter code: WRKY transcription factor 68 (277 aa).

Residues 51 to 96 form a disordered region; the sequence is TPLMHFPTTPNSSSSEAVNGDDEEEEDGEEQQHKTKKRFKFTKMSR. Residues 58–67 show a composition bias toward polar residues; it reads TTPNSSSSEA. Over residues 69-79 the composition is skewed to acidic residues; the sequence is NGDDEEEEDGE. Over residues 84 to 96 the composition is skewed to basic residues; the sequence is KTKKRFKFTKMSR. The segment at residues 112–177 is a DNA-binding region (WRKY); the sequence is SEVLHLDDGY…YEGQHTHPRP (66 aa). Residues 183-206 are disordered; that stretch reads KEGSSPSNGSASRAHIGLPTLPPQ.

Belongs to the WRKY group II-c family.

The protein localises to the nucleus. In terms of biological role, transcription factor. Interacts specifically with the W box (5'-(T)TGAC[CT]-3'), a frequently occurring elicitor-responsive cis-acting element. This is WRKY transcription factor 68 (WRKY68) from Arabidopsis thaliana (Mouse-ear cress).